A 408-amino-acid polypeptide reads, in one-letter code: E3 ubiquitin-protein ligase IE2 (408 aa).

The span at 1–10 shows a compositional bias: polar residues; that stretch reads MSRQINAATP. 2 disordered regions span residues 1-67 and 176-199; these read MSRQ…ENVQ and QSPD…QSEP. Positions 13–25 are enriched in basic residues; that stretch reads SRRHRLSLSRRRI. A compositionally biased stretch (low complexity) spans 30–47; it reads SPEAQPSSSSRSQPSSSS. Repeat copies occupy residues 34 to 41, 42 to 49, 51 to 54, and 55 to 58. The 2 X 8 AA tandem repeats of Q-P-S-S-S-S-R-S stretch occupies residues 34–49; that stretch reads QPSSSSRSQPSSSSRS. Residues 51–58 form a 2 X 4 AA tandem repeats of R-R-Q-E region; that stretch reads RRQERRQE. Low complexity predominate over residues 183-197; sequence SPQSPQPQQQQQQQS. The RING-type zinc-finger motif lies at 207-255; the sequence is CNICFTTFKDTKNVNSSFVTSIHCNHAVCFKCYVKIIMDNSVYKCFCSA.

It belongs to the alphabaculovirus IE2 protein family. Homooligomer. Auto-ubiquitinated.

The protein localises to the host nucleus. It catalyses the reaction S-ubiquitinyl-[E2 ubiquitin-conjugating enzyme]-L-cysteine + [acceptor protein]-L-lysine = [E2 ubiquitin-conjugating enzyme]-L-cysteine + N(6)-ubiquitinyl-[acceptor protein]-L-lysine.. Functionally, RING-finger E3 ubiquitin ligase that plays an important regulatory role during the initial stages of infection. Migrates to specific nuclear foci early in infection supposely to prepare the sites for viral transcription and replication by targeting and ubiquitinating host proteins. Acts as a transcriptional activator and activates a number of viral promoters including itself, IE1 and the promoter of 39K gene. In Lepidoptera (butterflies and moths), this protein is E3 ubiquitin-protein ligase IE2 (IE2).